Reading from the N-terminus, the 724-residue chain is Polyribonucleotide nucleotidyltransferase (724 aa).

Asp-488 and Asp-494 together coordinate Mg(2+). The KH domain occupies 555–614; it reads PRMITVKINPEKIRDVIGKGGSTIQALTKETGCTIDIGEDGTITIASTSSEGMAEAKRRI. The 69-residue stretch at 624–692 folds into the S1 motif domain; it reads GKIYNGTVLK…EKGRMRLSIK (69 aa). Positions 697–724 are disordered; it reads EEGDVPVAAPQAPGAGDAASQQQQQQQQ. Over residues 701 to 724 the composition is skewed to low complexity; it reads VPVAAPQAPGAGDAASQQQQQQQQ.

This sequence belongs to the polyribonucleotide nucleotidyltransferase family. It depends on Mg(2+) as a cofactor.

It localises to the cytoplasm. The catalysed reaction is RNA(n+1) + phosphate = RNA(n) + a ribonucleoside 5'-diphosphate. Functionally, involved in mRNA degradation. Catalyzes the phosphorolysis of single-stranded polyribonucleotides processively in the 3'- to 5'-direction. The chain is Polyribonucleotide nucleotidyltransferase from Ralstonia pickettii (strain 12J).